The chain runs to 252 residues: 3-deoxy-manno-octulosonate cytidylyltransferase (252 aa).

This sequence belongs to the KdsB family.

Its subcellular location is the cytoplasm. The enzyme catalyses 3-deoxy-alpha-D-manno-oct-2-ulosonate + CTP = CMP-3-deoxy-beta-D-manno-octulosonate + diphosphate. It participates in nucleotide-sugar biosynthesis; CMP-3-deoxy-D-manno-octulosonate biosynthesis; CMP-3-deoxy-D-manno-octulosonate from 3-deoxy-D-manno-octulosonate and CTP: step 1/1. The protein operates within bacterial outer membrane biogenesis; lipopolysaccharide biosynthesis. In terms of biological role, activates KDO (a required 8-carbon sugar) for incorporation into bacterial lipopolysaccharide in Gram-negative bacteria. In Rhodospirillum rubrum (strain ATCC 11170 / ATH 1.1.1 / DSM 467 / LMG 4362 / NCIMB 8255 / S1), this protein is 3-deoxy-manno-octulosonate cytidylyltransferase.